The following is a 186-amino-acid chain: Adrenodoxin, mitochondrial (186 aa).

The transit peptide at 1–58 (MAARLLRVASAALGDTAGRWRLLARPRAGAGGLRGSRGPGLGGGAVATRTLSVSGRAQ) directs the protein to the mitochondrion. Ser-61 is subject to Phosphoserine. Lys-64 is modified (N6-acetyllysine; alternate). Lys-64 bears the N6-succinyllysine; alternate mark. One can recognise a 2Fe-2S ferredoxin-type domain in the interval 65-169 (ITVHFINRDG…NMTVRVPDAV (105 aa)). 4 residues coordinate [2Fe-2S] cluster: Cys-104, Cys-110, Cys-113, and Cys-150. Lys-156 is subject to N6-succinyllysine. Phosphoserine is present on Ser-175.

This sequence belongs to the adrenodoxin/putidaredoxin family. As to quaternary structure, interacts with CYP11A1. [2Fe-2S] cluster serves as cofactor. In terms of tissue distribution, detected in adrenal cortex and corpus luteum (at protein level).

It is found in the mitochondrion matrix. Its function is as follows. Essential for the synthesis of various steroid hormones. Participates in the reduction of mitochondrial cytochrome P450 for steroidogenesis. Transfers electrons from adrenodoxin reductase to CYP11A1, a cytochrome P450 that catalyzes cholesterol side-chain cleavage to produce pregnenolone, the precursor of most steroid hormones. Does not form a ternary complex with adrenodoxin reductase and CYP11A1 but shuttles between the two enzymes to transfer electrons. The polypeptide is Adrenodoxin, mitochondrial (FDX1) (Bos taurus (Bovine)).